The following is a 548-amino-acid chain: Folylpolyglutamate synthase (548 aa).

An ATP-binding site is contributed by 130-133 (GKGS). Positions 157, 234, and 262 each coordinate Mg(2+). Residues Arg382 and Asp396 each contribute to the ATP site.

Belongs to the folylpolyglutamate synthase family. The cofactor is a monovalent cation.

Its subcellular location is the mitochondrion inner membrane. The protein resides in the mitochondrion matrix. It localises to the cytoplasm. The catalysed reaction is (6S)-5,6,7,8-tetrahydrofolyl-(gamma-L-Glu)(n) + L-glutamate + ATP = (6S)-5,6,7,8-tetrahydrofolyl-(gamma-L-Glu)(n+1) + ADP + phosphate + H(+). It participates in cofactor biosynthesis; tetrahydrofolylpolyglutamate biosynthesis. Its function is as follows. Catalyzes conversion of folates to polyglutamate derivatives allowing concentration of folate compounds in the cell and the intracellular retention of these cofactors, which are important substrates for most of the folate-dependent enzymes that are involved in one-carbon transfer reactions involved in purine, pyrimidine and amino acid synthesis. Required for methionine synthesis and maintenance of intact mitochondrial DNA. Involved in telomere maintenance. The protein is Folylpolyglutamate synthase of Saccharomyces cerevisiae (strain AWRI1631) (Baker's yeast).